A 418-amino-acid polypeptide reads, in one-letter code: UDP-N-acetylglucosamine 1-carboxyvinyltransferase (418 aa).

A phosphoenolpyruvate-binding site is contributed by 23–24 (KN). Arg93 lines the UDP-N-acetyl-alpha-D-glucosamine pocket. Asp117 functions as the Proton donor in the catalytic mechanism. UDP-N-acetyl-alpha-D-glucosamine contacts are provided by Asp305 and Val327.

Belongs to the EPSP synthase family. MurA subfamily.

It is found in the cytoplasm. It catalyses the reaction phosphoenolpyruvate + UDP-N-acetyl-alpha-D-glucosamine = UDP-N-acetyl-3-O-(1-carboxyvinyl)-alpha-D-glucosamine + phosphate. Its pathway is cell wall biogenesis; peptidoglycan biosynthesis. Cell wall formation. Adds enolpyruvyl to UDP-N-acetylglucosamine. This is UDP-N-acetylglucosamine 1-carboxyvinyltransferase from Mycobacterium bovis (strain ATCC BAA-935 / AF2122/97).